Here is a 280-residue protein sequence, read N- to C-terminus: Pantothenate synthetase (280 aa).

Met30 to His37 provides a ligand contact to ATP. The Proton donor role is filled by His37. Gln61 is a (R)-pantoate binding site. Position 61 (Gln61) interacts with beta-alanine. An ATP-binding site is contributed by Gly147 to Asp150. Gln153 provides a ligand contact to (R)-pantoate. ATP is bound by residues Val176 and Met184–Arg187.

This sequence belongs to the pantothenate synthetase family. In terms of assembly, homodimer.

The protein localises to the cytoplasm. The enzyme catalyses (R)-pantoate + beta-alanine + ATP = (R)-pantothenate + AMP + diphosphate + H(+). It functions in the pathway cofactor biosynthesis; (R)-pantothenate biosynthesis; (R)-pantothenate from (R)-pantoate and beta-alanine: step 1/1. Functionally, catalyzes the condensation of pantoate with beta-alanine in an ATP-dependent reaction via a pantoyl-adenylate intermediate. The chain is Pantothenate synthetase from Fervidobacterium nodosum (strain ATCC 35602 / DSM 5306 / Rt17-B1).